The sequence spans 754 residues: MKFTRRSFVKASALATAMVAAGCSPQPVAPKQNPETEGATWYKTVCRYCGVGCGVMVAAKDNRVVAVKGDTENPVNKGLLCVKGYYLDRIMNTEEGRILKPLIRKNGQLTEASWDEALDLVAARFREAIDQHGPDSVGFYGSGQNLAEETYIANKLFKGCIGTNNVEGNPRTCMASAVAGFLSTFGKDEPMGNLDDIEHADTFFIIGSNTAEAHPIIYSRITTRKQTGKDVKVILADPRRHRVADIADIFLPFRPGTDLALLNAFAQVIIEEGLHDPDFIERHTTFQDGNGAITFEQYVAFLQDYTPEKVAPITGLSPDDIRAAAREIGARGRKTMTLWCMGINQRTVGTWLNNAIYNLHLLTGKICQPGNSPFSLTGQPSACGSVREGGGLSHLLPCGRQVTNEQHRKEVAAVWGVDYTRMSDKVGYHTMEMFRAAGDGRIKALLISCTNPGHSLPNLNSVRASLEKTFLVVMDAFHNRTTELADVVLPSALWCEKEGIYGNTERRTQHLAKAVEPKGEARPDVWILLEIAKRLGYGEYFSHYTSNEVIWEEFRKMGGGGTGYDYAPYERYKQERGLRWPVNDKQPAGTTLRYVEGDDPFVPEGAGIYFYGKPDGKAVIYARPHRDPAEVPDAEYPFYLSTGRILEHWHTITMTKRVPEIMKGAGEFYCEIHEEDAARLGIQNGDLVKLTSRRGQVVATARVGGRAVPQKGLVFLLMHDDRTERLANFLTNDAVDETSKQMEYKVCAVRVEKA.

The tat-type signal signal peptide spans 1 to 31; that stretch reads MKFTRRSFVKASALATAMVAAGCSPQPVAPK. A 4Fe-4S Mo/W bis-MGD-type domain is found at 39 to 95; the sequence is ATWYKTVCRYCGVGCGVMVAAKDNRVVAVKGDTENPVNKGLLCVKGYYLDRIMNTEE. [4Fe-4S] cluster is bound by residues Cys46, Cys49, Cys53, and Cys81. Mo-bis(molybdopterin guanine dinucleotide)-binding positions include Lys83, Gln144, Asn169, Cys173, 256 to 258, Met341, Gln345, Asn451, Lys497, Asp524, 642 to 651, Asn728, and Lys745; these read GTD and TGRILEHWHT.

The protein belongs to the prokaryotic molybdopterin-containing oxidoreductase family. NasA/NapA/NarB subfamily. As to quaternary structure, component of the nitrate reductase NapAB complex composed of NapA and NapB. [4Fe-4S] cluster serves as cofactor. Mo-bis(molybdopterin guanine dinucleotide) is required as a cofactor. In terms of processing, predicted to be exported by the Tat system. The position of the signal peptide cleavage has not been experimentally proven.

It localises to the secreted. It catalyses the reaction 2 Fe(II)-[cytochrome] + nitrate + 2 H(+) = 2 Fe(III)-[cytochrome] + nitrite + H2O. In terms of biological role, catalytic subunit of the nitrate reductase complex NapAB. Receives electrons from NapB and catalyzes the reduction of nitrate to nitrite. The sequence is that of Nitrate reductase from Symbiobacterium thermophilum (strain DSM 24528 / JCM 14929 / IAM 14863 / T).